Here is a 389-residue protein sequence, read N- to C-terminus: Innexin-6 (389 aa).

The next 4 helical transmembrane spans lie at V36–I56, V111–A131, L190–L210, and L276–F296.

Belongs to the pannexin family.

The protein localises to the cell membrane. The protein resides in the cell junction. Its subcellular location is the gap junction. Structural component of the gap junctions. The polypeptide is Innexin-6 (inx-6) (Caenorhabditis elegans).